A 391-amino-acid chain; its full sequence is DNA-directed RNA polymerase subunit Rpo1C (391 aa).

The protein belongs to the RNA polymerase beta' chain family. Part of the RNA polymerase complex.

Its subcellular location is the cytoplasm. The protein resides in the chromosome. It carries out the reaction RNA(n) + a ribonucleoside 5'-triphosphate = RNA(n+1) + diphosphate. Functionally, DNA-dependent RNA polymerase (RNAP) catalyzes the transcription of DNA into RNA using the four ribonucleoside triphosphates as substrates. Forms part of the jaw domain. This chain is DNA-directed RNA polymerase subunit Rpo1C, found in Thermococcus kodakarensis (strain ATCC BAA-918 / JCM 12380 / KOD1) (Pyrococcus kodakaraensis (strain KOD1)).